A 751-amino-acid polypeptide reads, in one-letter code: Protein CLMP1 (751 aa).

Residues methionine 1–serine 11 show a composition bias toward basic residues. The interval methionine 1–serine 33 is disordered. Over residues glycine 12 to glycine 28 the composition is skewed to low complexity. TPR repeat units follow at residues alanine 51–serine 84, alanine 89–phenylalanine 124, and threonine 125–histidine 158. The region spanning tryptophan 290–valine 382 is the PB1 domain. The interval glutamine 386–lysine 443 is disordered. Over residues leucine 390–glutamate 399 the composition is skewed to acidic residues. The segment covering serine 409 to glutamate 419 has biased composition (polar residues). A compositionally biased stretch (basic and acidic residues) spans asparagine 421–lysine 443. TPR repeat units lie at residues alanine 434–alanine 468, serine 481–asparagine 514, and glutamate 536–phenylalanine 570. Basic and acidic residues predominate over residues glutamate 630 to serine 648. Residues glutamate 630–serine 663 form a disordered region.

Interacts with myosin XI-K. As to expression, expressed in roots, stems, leaves, apex, flowers and seeds. Detected throughout the petiole in juvenile and young leaves, but restricted to the petiole midvein in older leaves. Expressed in hydathodes, at the base of the trichome, in the vascular cylinder of primary root and lateral root, in emerging lateral root primordia, in pollen and in developing embryos, but not in mature embryos.

The protein localises to the cytoplasm. Functionally, required for plastid separation and partitioning during cell division. Not involved in plastid constriction or in the organization of cytoplasmic actin cables. Contributes to polar growth of root hairs. This is Protein CLMP1 from Arabidopsis thaliana (Mouse-ear cress).